The following is a 132-amino-acid chain: Small ribosomal subunit protein uS9 (132 aa).

This sequence belongs to the universal ribosomal protein uS9 family.

The sequence is that of Small ribosomal subunit protein uS9 from Methanothrix thermoacetophila (strain DSM 6194 / JCM 14653 / NBRC 101360 / PT) (Methanosaeta thermophila).